Here is a 345-residue protein sequence, read N- to C-terminus: Class I histocompatibility antigen, F10 alpha chain (345 aa).

The first 22 residues, 1–22 (MGPCGALGLGLLLAAVCGAAAP), serve as a signal peptide directing secretion. The alpha-1 stretch occupies residues 23-110 (ELHTLRYIQT…ILQRRYNQTG (88 aa)). Topologically, residues 23–301 (ELHTLRYIQT…WEPPQPNLVP (279 aa)) are extracellular. N-linked (GlcNAc...) asparagine glycans are attached at residues asparagine 59 and asparagine 107. An alpha-2 region spans residues 111–201 (GSHTVQWMYG…EYGKAELGRR (91 aa)). 2 cysteine pairs are disulfide-bonded: cysteine 121–cysteine 183 and cysteine 221–cysteine 277. The interval 202–292 (ERPEVRVWGK…SLPQPGLYSW (91 aa)) is alpha-3. Residues 204 to 293 (PEVRVWGKEA…LPQPGLYSWE (90 aa)) enclose the Ig-like C1-type domain. A connecting peptide region spans residues 293-301 (EPPQPNLVP). Residues 302–324 (IVAGVAVAIVAIAIMVGVGFIIY) traverse the membrane as a helical segment. The Cytoplasmic segment spans residues 325–345 (RRHAGKKGKGYNIAPGSNPAI).

This sequence belongs to the MHC class I family. In terms of assembly, heterodimer of an alpha chain and a beta chain (beta-2-microglobulin).

It is found in the membrane. Its function is as follows. Involved in the presentation of foreign antigens to the immune system. The polypeptide is Class I histocompatibility antigen, F10 alpha chain (Gallus gallus (Chicken)).